The primary structure comprises 278 residues: Beta-lactamase-like protein str5 (278 aa).

Residues 20-37 (VFVLAALLSATFAFFTHT) form a helical membrane-spanning segment. N112 carries N-linked (GlcNAc...) asparagine glycosylation.

Belongs to the beta-lactamase family.

It localises to the membrane. Its pathway is mycotoxin biosynthesis. In terms of biological role, beta-lactamase-like protein; part of the gene cluster that mediates the biosynthesis of strobilurin A, an antifungal polyketide that contains a key beta-methoxyacrylate toxophore that targets the complex III of the mitochondrial electron transport chain. Strobilurin biosynthesis begins with construction of benzoyl CoA by step-wise elimination of ammonia from phenylalanine by the phenylalanine ammonia-lyase str11, oxygenation by str8 and retro-Claisen reaction to form benzoic acid, which is activated to its CoA thiolester benzoyl CoA by the dedicated CoA ligase str10. Benzoyl CoA forms the starter unit for the highly reducing polyketide synthase stpks1 that produces the polyketide prestrobilutin A. The FAD-dependent oxygenase str9 then catalyzes the key oxidative rearrangement responsible for the creation of the beta-methoxyacrylate toxophore. Str9 performs epoxidation of the 2,3 olefin of prestrobilutin A, followed by Meinwald rearrangement to furnish the aldehyde intermediate. Rapid enolization of the aldehyde intermediate would give the beta-methoxyacrylate skeleton and methylations catalyzed by str2 and str3 complete the synthesis and lead to the production of strobilurin A. The short-chain dehydrogenase stl2 and the dehydrogenase str4 play a role in the shunt pathway leading to the production of bolineol. The cluster encodes no obvious halogenase gene that could be involved in production of strobilurin B, nor any obvious dimethylallyl-transferase that could be involved in the production of strobilurin G. It is possible that unknown proteins encoded in, or near, the cluster (such as str1 or stl1) may form new classes of halogenases or dimethylally-transferases, or that the responsible genes are located elsewhere on the genome. Similarly, proteins encoded by str5/str6 hydrolases appear to have no chemical role in the biosynthesis of strobilurin A. Finally, no obvious self-resistance gene is found within the cluster. This chain is Beta-lactamase-like protein str5, found in Strobilurus tenacellus.